The following is an 88-amino-acid chain: Putative membrane protein insertion efficiency factor (88 aa).

A disordered region spans residues 67–88; that stretch reads LNAGGYDPVPPKSDNHSKENKK. The span at 79–88 shows a compositional bias: basic and acidic residues; sequence SDNHSKENKK.

It belongs to the UPF0161 family.

Its subcellular location is the cell inner membrane. In terms of biological role, could be involved in insertion of integral membrane proteins into the membrane. This chain is Putative membrane protein insertion efficiency factor, found in Actinobacillus succinogenes (strain ATCC 55618 / DSM 22257 / CCUG 43843 / 130Z).